The following is a 373-amino-acid chain: XK-related protein 9 (373 aa).

8 helical membrane passes run 8–28 (FMMS…DIWV), 38–58 (YVFS…AQCF), 166–186 (AAIM…QVAL), 203–223 (ITYL…VVLL), 224–244 (LFLN…LGII), 256–276 (CISM…FTFF), 295–315 (VLGT…IFNP), and 318–338 (FIPI…FLIV).

The protein belongs to the XK family. Undergoes proteolytic processing by caspase-3 (CASP3), caspase-6 (CASP6) and caspase-7 (CASP7) to generate the XK-related protein 9, processed form, leading to its activation.

It is found in the cell membrane. The catalysed reaction is a 1,2-diacyl-sn-glycero-3-phospho-L-serine(in) = a 1,2-diacyl-sn-glycero-3-phospho-L-serine(out). Its activity is regulated as follows. Activated upon caspase cleavage to generate the XK-related protein 9, processed form. Does not act prior the onset of apoptosis. Functionally, phospholipid scramblase that promotes phosphatidylserine exposure on apoptotic cell surface. Phosphatidylserine is a specific marker only present at the surface of apoptotic cells and acts as a specific signal for engulfment. The polypeptide is XK-related protein 9 (Homo sapiens (Human)).